A 495-amino-acid polypeptide reads, in one-letter code: Protein painting of fourth (495 aa).

The tract at residues 1 to 51 (MDSKRAALESGDGPDAKRLDTTDDQDKEASGGDGSQVMLAKHVAPYTGHGC) is disordered. Residues 215–289 (CSLYVGNIPF…RTLTVRYRRL (75 aa)) form the RRM domain. Low complexity predominate over residues 332–342 (ISDSDNCSDSS). Disordered regions lie at residues 332-358 (ISDS…INEQ), 432-451 (PVPA…KKAK), and 461-495 (GPFR…DPDP). The span at 345–358 (GKEDGKRKKKINEQ) shows a compositional bias: basic and acidic residues. The short motif at 351-367 (RKKKINEQEREIEKLKR) is the Bipartite nuclear localization signal element. A compositionally biased stretch (basic and acidic residues) spans 472–495 (TADEYEKDDRLEELYAQLERDPDP).

Interacts with Zeste. As to expression, weakly expressed in embryos. Expression increases during larval and pupal stages. In adults, it is predominantly expressed in males, while it is weakly expressed in females.

It localises to the nucleus. It is found in the chromosome. Its function is as follows. Probable RNA-binding protein that specifically binds to the fourth chromosome and may bind an RNA that spreads the fourth chromosome. May be a reminiscence of X chromosome dosage compensation of ancestral Drosophila species in which the X and the fourth chromosomes are one single chromosome. The protein is Protein painting of fourth (Pof) of Drosophila melanogaster (Fruit fly).